The following is a 244-amino-acid chain: 1-(5-phosphoribosyl)-5-[(5-phosphoribosylamino)methylideneamino] imidazole-4-carboxamide isomerase (244 aa).

Catalysis depends on Asp-8, which acts as the Proton acceptor. Asp-130 functions as the Proton donor in the catalytic mechanism.

Belongs to the HisA/HisF family.

The protein resides in the cytoplasm. The enzyme catalyses 1-(5-phospho-beta-D-ribosyl)-5-[(5-phospho-beta-D-ribosylamino)methylideneamino]imidazole-4-carboxamide = 5-[(5-phospho-1-deoxy-D-ribulos-1-ylimino)methylamino]-1-(5-phospho-beta-D-ribosyl)imidazole-4-carboxamide. It participates in amino-acid biosynthesis; L-histidine biosynthesis; L-histidine from 5-phospho-alpha-D-ribose 1-diphosphate: step 4/9. The sequence is that of 1-(5-phosphoribosyl)-5-[(5-phosphoribosylamino)methylideneamino] imidazole-4-carboxamide isomerase from Hahella chejuensis (strain KCTC 2396).